Here is a 1335-residue protein sequence, read N- to C-terminus: Phospholipid-transporting ATPase IK (1335 aa).

The Cytoplasmic segment spans residues 1–74 (MDGVHLGENL…LYEQFHRMSN (74 aa)). A helical transmembrane segment spans residues 75-95 (LYFLFIIILQGIPEISTLPWF). Residues 96–295 (TLFAPLVCLF…LDLMMNKLVA (200 aa)) are Exoplasmic loop-facing. A helical membrane pass occupies residues 296–316 (LIFLSLVIASLLLTVGFTFMV). The Cytoplasmic portion of the chain corresponds to 317-339 (KQFKAKHYYMSPTHGRSDAMESF). The chain crosses the membrane as a helical span at residues 340 to 360 (FIFWGFLILLSVMVPMAMFII). Residues 361–917 (AEFIYLGNSI…YMRVCKFLRY (557 aa)) are Exoplasmic loop-facing. The 4-aspartylphosphate intermediate role is filled by aspartate 407. Positions 407, 408, 409, 504, 545, 568, 601, 681, 682, 683, 831, and 837 each coordinate ATP. Aspartate 407 contributes to the Mg(2+) binding site. Threonine 409 lines the Mg(2+) pocket. Position 857 (aspartate 857) interacts with Mg(2+). Positions 860 and 861 each coordinate ATP. Aspartate 861 is a Mg(2+) binding site. Residues 918 to 938 (FFYKTVASMMAQIWFSLVNGF) traverse the membrane as a helical segment. The Cytoplasmic portion of the chain corresponds to 939–946 (SAQPLYEG). Residues 947-967 (WFLALFNLLYSTLPVLYIGLF) form a helical membrane-spanning segment. The Exoplasmic loop segment spans residues 968-995 (EQDVTAEKSLKMPELYMAGQKGELFNYS). Residues 996–1016 (IFMQAITHGTITSMINFFVTV) traverse the membrane as a helical segment. At 1017–1033 (MVSSDMSKAGSSHDYQS) the chain is on the cytoplasmic side. Residues 1034 to 1054 (LGVLVAISSLLSVTLEVMLVV) traverse the membrane as a helical segment. A topological domain (exoplasmic loop) is located at residue lysine 1055. Residues 1056–1076 (YWTLLFVGAVVLSLSSYVLMT) traverse the membrane as a helical segment. At 1077 to 1104 (SLTQSLWMYRISPKTFPFLFADYNVLFE) the chain is on the cytoplasmic side. Residues 1105–1125 (PCSLLLIVLNVALNVLPMLAL) form a helical membrane-spanning segment. Residues 1126-1335 (RTIHRTVLKQ…SQLEVPRKQS (210 aa)) lie on the Exoplasmic loop side of the membrane. Disordered stretches follow at residues 1192 to 1215 (VDDS…PLQN), 1236 to 1280 (FGKG…GKLL), and 1314 to 1335 (SPLW…RKQS). Composition is skewed to polar residues over residues 1246–1255 (PNTSSQTMEK) and 1266–1276 (QKLPTTTSATS).

It belongs to the cation transport ATPase (P-type) (TC 3.A.3) family. Type IV subfamily. Mg(2+) is required as a cofactor. In terms of tissue distribution, expressed in testis, specifically in spermatids within seminiferous tubules (at protein level).

Its subcellular location is the cytoplasmic vesicle. The protein resides in the secretory vesicle. The protein localises to the acrosome membrane. It localises to the endoplasmic reticulum membrane. The enzyme catalyses ATP + H2O + phospholipidSide 1 = ADP + phosphate + phospholipidSide 2.. It catalyses the reaction a 1,2-diacyl-sn-glycero-3-phospho-L-serine(out) + ATP + H2O = a 1,2-diacyl-sn-glycero-3-phospho-L-serine(in) + ADP + phosphate + H(+). In terms of biological role, P4-ATPase flippase which catalyzes the hydrolysis of ATP coupled to the transport of aminophospholipids from the outer to the inner leaflet of various membranes and ensures the maintenance of asymmetric distribution of phospholipids. Phospholipid translocation also seems to be implicated in vesicle formation and in uptake of lipid signaling molecules. May be responsible for the maintenance of asymmetric distribution of phosphatidylserine (PS) in spermatozoa membranes. Involved in acrosome reactions and binding of spermatozoa to zona pellucida. This chain is Phospholipid-transporting ATPase IK, found in Mus musculus (Mouse).